A 158-amino-acid polypeptide reads, in one-letter code: Cyclic pyranopterin monophosphate synthase (158 aa).

Substrate-binding positions include 75–77 and 113–114; these read LCH and ME. Asp-128 is an active-site residue.

Belongs to the MoaC family. As to quaternary structure, homohexamer; trimer of dimers.

It carries out the reaction (8S)-3',8-cyclo-7,8-dihydroguanosine 5'-triphosphate = cyclic pyranopterin phosphate + diphosphate. It participates in cofactor biosynthesis; molybdopterin biosynthesis. In terms of biological role, catalyzes the conversion of (8S)-3',8-cyclo-7,8-dihydroguanosine 5'-triphosphate to cyclic pyranopterin monophosphate (cPMP). This is Cyclic pyranopterin monophosphate synthase from Dinoroseobacter shibae (strain DSM 16493 / NCIMB 14021 / DFL 12).